The sequence spans 202 residues: tRNA (pseudouridine(54)-N(1))-methyltransferase (202 aa).

Residues leucine 130, glycine 152, and cysteine 185 each contribute to the S-adenosyl-L-methionine site.

Belongs to the methyltransferase superfamily. TrmY family. As to quaternary structure, homodimer.

It is found in the cytoplasm. It catalyses the reaction pseudouridine(54) in tRNA + S-adenosyl-L-methionine = N(1)-methylpseudouridine(54) in tRNA + S-adenosyl-L-homocysteine + H(+). Its function is as follows. Specifically catalyzes the N1-methylation of pseudouridine at position 54 (Psi54) in tRNAs. In Methanococcoides burtonii (strain DSM 6242 / NBRC 107633 / OCM 468 / ACE-M), this protein is tRNA (pseudouridine(54)-N(1))-methyltransferase.